The primary structure comprises 44 residues: U4-ctenitoxin-Co1a (44 aa).

Disulfide bonds link cysteine 2–cysteine 19, cysteine 9–cysteine 25, cysteine 18–cysteine 39, and cysteine 27–cysteine 37.

As to expression, expressed by the venom gland.

Its subcellular location is the secreted. In terms of biological role, omega-agatoxins are antagonists of voltage-gated calcium channels (Cav). Toxic to mice by intracerebroventricular injection. This is U4-ctenitoxin-Co1a from Ctenus ornatus (Brazilian spider).